The primary structure comprises 66 residues: Large ribosomal subunit protein bL35 (66 aa).

This sequence belongs to the bacterial ribosomal protein bL35 family.

The sequence is that of Large ribosomal subunit protein bL35 from Ruegeria pomeroyi (strain ATCC 700808 / DSM 15171 / DSS-3) (Silicibacter pomeroyi).